Consider the following 195-residue polypeptide: Xanthine phosphoribosyltransferase (195 aa).

Leu20 and Asn27 together coordinate xanthine. 5-phospho-alpha-D-ribose 1-diphosphate is bound at residue 128–132 (ANGQA). Xanthine is bound at residue Lys156.

Belongs to the purine/pyrimidine phosphoribosyltransferase family. Xpt subfamily. In terms of assembly, homodimer.

The protein resides in the cytoplasm. The catalysed reaction is XMP + diphosphate = xanthine + 5-phospho-alpha-D-ribose 1-diphosphate. Its pathway is purine metabolism; XMP biosynthesis via salvage pathway; XMP from xanthine: step 1/1. Its function is as follows. Converts the preformed base xanthine, a product of nucleic acid breakdown, to xanthosine 5'-monophosphate (XMP), so it can be reused for RNA or DNA synthesis. The protein is Xanthine phosphoribosyltransferase of Limosilactobacillus fermentum (strain NBRC 3956 / LMG 18251) (Lactobacillus fermentum).